Reading from the N-terminus, the 134-residue chain is Interleukin-5 (134 aa).

Positions 1 to 19 (MRMLLHLSLLALGAAYVSA) are cleaved as a signal peptide. Asn76 and Asn90 each carry an N-linked (GlcNAc...) asparagine glycan.

It belongs to the IL-5 family. In terms of assembly, homodimer; disulfide-linked. Interacts with IL5RA. Interacts with CSF2RB.

The protein localises to the secreted. In terms of biological role, homodimeric cytokine expressed predominantly by T-lymphocytes and NK cells that plays an important role in the survival, differentiation, and chemotaxis of eosinophils. Also acts on activated and resting B-cells to induce immunoglobulin production, growth, and differentiation. Mechanistically, exerts its biological effects through a receptor composed of IL5RA subunit and the cytokine receptor common subunit beta/CSF2RB. Binding to the receptor leads to activation of various kinases including LYN, SYK and JAK2 and thereby propagates signals through the RAS-MAPK and JAK-STAT5 pathways respectively. The protein is Interleukin-5 (IL5) of Felis catus (Cat).